A 172-amino-acid chain; its full sequence is Ribosome maturation factor RimM (172 aa).

Residues 96 to 168 (DGEFYYHEII…RVQVELMEGL (73 aa)) enclose the PRC barrel domain.

The protein belongs to the RimM family. As to quaternary structure, binds ribosomal protein uS19.

It localises to the cytoplasm. Functionally, an accessory protein needed during the final step in the assembly of 30S ribosomal subunit, possibly for assembly of the head region. Essential for efficient processing of 16S rRNA. May be needed both before and after RbfA during the maturation of 16S rRNA. It has affinity for free ribosomal 30S subunits but not for 70S ribosomes. The chain is Ribosome maturation factor RimM from Streptococcus agalactiae serotype Ia (strain ATCC 27591 / A909 / CDC SS700).